The primary structure comprises 307 residues: Protein EI24 homolog (307 aa).

2 helical membrane passes run 53–73 and 92–112; these read FIHCIFLNGIIFLGTYLIYLY and MFTIIYFSLWVYPVYIFSIIA. Residue N135 is glycosylated (N-linked (GlcNAc...) asparagine). 4 consecutive transmembrane segments (helical) span residues 153–173, 175–195, 225–245, and 260–280; these read LFGVILVMSAIIAFIPYTNFI, FVIITWLYSFWCFDYKWILRG, FFFPMLIGNAIFSILYPLFII, and GILPKQIPIFYVPEIIVNVIL.

The protein belongs to the EI24 family.

It localises to the membrane. The chain is Protein EI24 homolog from Dictyostelium discoideum (Social amoeba).